A 1257-amino-acid polypeptide reads, in one-letter code: Stromal processing peptidase, chloroplastic (1257 aa).

The transit peptide at M1–H142 directs the protein to the chloroplast. H236 is a Zn(2+) binding site. E239 serves as the catalytic Proton acceptor. Zn(2+) is bound at residue H240. E309 is an active-site residue. Residue E316 participates in Zn(2+) binding. Residues E1233–T1257 form a disordered region.

It belongs to the peptidase M16 family. It depends on Zn(2+) as a cofactor.

It localises to the plastid. Its subcellular location is the chloroplast stroma. Functionally, cleaves presequences (transit peptides) from chloroplastic protein precursors. Initially recognizes a precursor by binding to the C-terminus of its transit peptide and then removes the transit peptide in a single endoproteolytic step. In a next step, pursues the cleavage of transit peptide to a subfragment form. This chain is Stromal processing peptidase, chloroplastic, found in Pisum sativum (Garden pea).